A 156-amino-acid chain; its full sequence is RING finger protein 224 (156 aa).

The segment at 23 to 70 adopts an RING-type zinc-finger fold; the sequence is CIICYSAYDLSVHLPRRLYCGHTFCQACMQRLDMPAHEQHWIPCPQCR.

This chain is RING finger protein 224 (Rnf224), found in Mus musculus (Mouse).